A 324-amino-acid polypeptide reads, in one-letter code: dITP/XTP pyrophosphatase (324 aa).

The segment at 1–126 is unknown; sequence MTKSIFEYKD…SDNKSDFGDV (126 aa). The NTP pyrophosphatase stretch occupies residues 127-324; the sequence is LLIATRNEGK…EVFPAWQNKQ (198 aa). Position 131-136 (131-136) interacts with substrate; sequence TRNEGK. Aspartate 193 serves as the catalytic Proton acceptor. Aspartate 193 contributes to the Mg(2+) binding site. Substrate contacts are provided by residues serine 194, 277-280, lysine 300, and 305-306; these read FGYD and HR.

This sequence belongs to the HAM1 NTPase family. Homodimer. Requires Mg(2+) as cofactor.

It carries out the reaction XTP + H2O = XMP + diphosphate + H(+). The catalysed reaction is dITP + H2O = dIMP + diphosphate + H(+). The enzyme catalyses ITP + H2O = IMP + diphosphate + H(+). Its function is as follows. Pyrophosphatase that catalyzes the hydrolysis of nucleoside triphosphates to their monophosphate derivatives, with a high preference for the non-canonical purine nucleotides XTP (xanthosine triphosphate), dITP (deoxyinosine triphosphate) and ITP. Seems to function as a house-cleaning enzyme that removes non-canonical purine nucleotides from the nucleotide pool, thus preventing their incorporation into DNA/RNA and avoiding chromosomal lesions. This Streptococcus thermophilus (strain ATCC BAA-250 / LMG 18311) protein is dITP/XTP pyrophosphatase.